The chain runs to 148 residues: Putative nickel-responsive regulator (148 aa).

Residues H88, H99, H101, and C107 each contribute to the Ni(2+) site.

It belongs to the transcriptional regulatory CopG/NikR family. As to quaternary structure, homotetramer. The cofactor is Ni(2+).

Its function is as follows. Transcriptional regulator. This chain is Putative nickel-responsive regulator, found in Helicobacter pylori (strain ATCC 700392 / 26695) (Campylobacter pylori).